The chain runs to 188 residues: Pro-adrenomedullin (188 aa).

The signal sequence occupies residues 1–21 (MKLVPVALMYLGSLAFLGADT). Residue Arg41 is modified to Arginine amide. Positions 45–92 (ELRLSSSYPTGIADLKAGPAQTVIRPQDVKGSSRSPQASIPDAARIRV) are excised as a propeptide. A disulfide bridge links Cys110 with Cys115. The segment at 131–177 (DKDGVAPRSKISPQGYGRRRRRSLPEASLGRTLRSQEPQAHGAPASP) is disordered. Tyr146 bears the Tyrosine amide mark. Positions 153-188 (SLPEASLGRTLRSQEPQAHGAPASPAHQVLATLFRI) are cleaved as a propeptide — preproAM C-terminal fragment.

Belongs to the adrenomedullin family. As to expression, highly expressed in adrenal glands, lung and kidney.

The protein resides in the secreted. Adrenomedullin/ADM and proadrenomedullin N-20 terminal peptide/PAMP are peptide hormones that act as potent hypotensive and vasodilatator agents. Numerous actions have been reported most related to the physiologic control of fluid and electrolyte homeostasis. In terms of biological role, ADM function is mediated by the CALCRL-RAMP2 and CALCRL-RAMP3 receptor complexes with ADM showing the highest potency for the CALCRL-RAMP2 complex. In Sus scrofa (Pig), this protein is Pro-adrenomedullin (ADM).